The primary structure comprises 360 residues: Alpha-ketoglutarate dependent kainoid synthase (360 aa).

The Fe2OG dioxygenase domain maps to 200–310 (MFFSNRIYPE…RASLISFYEP (111 aa)). Residues H225, D227, and H286 each contribute to the Fe cation site. R301 contributes to the 2-oxoglutarate binding site.

The protein belongs to the iron/ascorbate-dependent oxidoreductase family. Fe(2+) is required as a cofactor.

The catalysed reaction is prekainate + 2-oxoglutarate + O2 = kainate + succinate + CO2 + H2O. It carries out the reaction prekainate + 2-oxoglutarate + O2 + H(+) = kainate lactone + succinate + CO2 + H2O. It participates in secondary metabolite biosynthesis. Its activity is regulated as follows. Inhibited by the iron chelator EDTA. Its function is as follows. Iron/ascorbate-dependent oxidoreductase: part of the gene cluster that mediates the biosynthesis of kainic acid (KA) and derivatives, natural products with neurochemical activity acting as ionotropic glutamate receptor (iGluR) agonists, thus being neurotoxins. Catalyzes the conversion of prekainic acid to kainic acid and kainic acid lactone. The protein is Alpha-ketoglutarate dependent kainoid synthase of Digenea simplex (Marine red alga).